The chain runs to 398 residues: Chorismate synthase (398 aa).

NADP(+)-binding residues include Arg44 and Arg50. Residues 133-135 (RAS), 261-262 (QA), Gly306, 321-325 (KPIPT), and Arg347 contribute to the FMN site.

The protein belongs to the chorismate synthase family. As to quaternary structure, homotetramer. FMNH2 serves as cofactor.

It catalyses the reaction 5-O-(1-carboxyvinyl)-3-phosphoshikimate = chorismate + phosphate. It functions in the pathway metabolic intermediate biosynthesis; chorismate biosynthesis; chorismate from D-erythrose 4-phosphate and phosphoenolpyruvate: step 7/7. Catalyzes the anti-1,4-elimination of the C-3 phosphate and the C-6 proR hydrogen from 5-enolpyruvylshikimate-3-phosphate (EPSP) to yield chorismate, which is the branch point compound that serves as the starting substrate for the three terminal pathways of aromatic amino acid biosynthesis. This reaction introduces a second double bond into the aromatic ring system. The chain is Chorismate synthase from Aquifex aeolicus (strain VF5).